The primary structure comprises 177 residues: Large ribosomal subunit protein uL6 (177 aa).

It belongs to the universal ribosomal protein uL6 family. Part of the 50S ribosomal subunit.

This protein binds to the 23S rRNA, and is important in its secondary structure. It is located near the subunit interface in the base of the L7/L12 stalk, and near the tRNA binding site of the peptidyltransferase center. In Leptothrix cholodnii (strain ATCC 51168 / LMG 8142 / SP-6) (Leptothrix discophora (strain SP-6)), this protein is Large ribosomal subunit protein uL6.